A 170-amino-acid chain; its full sequence is TFIIB-type zinc finger protein (170 aa).

The TFIIB-type zinc-finger motif lies at 1-30 (MECPVCGSNEIVWDNKNGEVVCSNCGIIID). C3, C6, C22, and C25 together coordinate Zn(2+).

It belongs to the TFIIB family. Zn(2+) is required as a cofactor.

This chain is TFIIB-type zinc finger protein, found in Saccharolobus shibatae (strain ATCC 51178 / DSM 5389 / JCM 8931 / NBRC 15437 / B12) (Sulfolobus shibatae).